The following is a 403-amino-acid chain: Blue light- and temperature-regulated antirepressor BluF (403 aa).

The BLUF domain maps to 2-93 (LTTLIYRSHI…ARRFGKAGME (92 aa)). The segment at 98-144 (RLHERDDVLQAVFDKGTSKFQLTYDDRALQFFRTFVLATEQSTYFEI) is joining helix. Positions 155-403 (DGSDKELDSC…IPSIAWPEKK (249 aa)) constitute an EAL domain.

In terms of assembly, monomer, it undergoes transient dimerization following photoexcitation or upon temperature reduction, with a relaxation time of about 2 minutes. The dimer may be the inactive state. Interacts with the N- and C-terminal domains of BluR. Can also interact with the C-terminal domain of MlrA. FAD is required as a cofactor.

Binds to and releases the BluR repressor from its bound DNA target in a blue light-dependent (470 nm) fashion. A shift to low temperature also triggers a BluF-mediated relief of repression by BluR, suggesting BluF may serve as a thermometer. Blue light may act to increase the affinity of BluF for BluR, allowing it to be released from its operator. The protein has a reversible photocycle, and undergoes structural changes, probably in the EAL domain, in response to light. The chain is Blue light- and temperature-regulated antirepressor BluF from Escherichia coli (strain K12).